Consider the following 425-residue polypeptide: L-lysine N6-monooxygenase (425 aa).

8–14 (IGVGTGP) is an FAD binding site.

It belongs to the lysine N(6)-hydroxylase/L-ornithine N(5)-oxygenase family. Requires FAD as cofactor.

Its subcellular location is the cytoplasm. It is found in the cell membrane. It catalyses the reaction L-lysine + NADPH + O2 = N(6)-hydroxy-L-lysine + NADP(+) + H2O. Its pathway is siderophore biosynthesis; aerobactin biosynthesis. Its function is as follows. Flavoprotein monooxygenase required for N-hydroxylation of lysine. Involved in the biosynthesis of the siderophore aerobactin which is a chelator that mediates the high-affinity iron transport systems induced by the organism under iron-stressed conditions. In Escherichia coli, this protein is L-lysine N6-monooxygenase.